The sequence spans 279 residues: Undecaprenyl-diphosphatase (279 aa).

Helical transmembrane passes span 45 to 65, 85 to 105, 113 to 133, 188 to 208, 226 to 246, and 255 to 275; these read FVEM…IVIY, WQLW…ALPF, FNFM…FIWV, SVAA…YSGL, LILL…IRFL, and FTIF…YWLV.

This sequence belongs to the UppP family.

It is found in the cell membrane. The catalysed reaction is di-trans,octa-cis-undecaprenyl diphosphate + H2O = di-trans,octa-cis-undecaprenyl phosphate + phosphate + H(+). In terms of biological role, catalyzes the dephosphorylation of undecaprenyl diphosphate (UPP). Confers resistance to bacitracin. The sequence is that of Undecaprenyl-diphosphatase from Streptococcus agalactiae serotype Ia (strain ATCC 27591 / A909 / CDC SS700).